The chain runs to 255 residues: Leucyl/phenylalanyl-tRNA--protein transferase (255 aa).

Belongs to the L/F-transferase family.

The protein localises to the cytoplasm. The catalysed reaction is N-terminal L-lysyl-[protein] + L-leucyl-tRNA(Leu) = N-terminal L-leucyl-L-lysyl-[protein] + tRNA(Leu) + H(+). The enzyme catalyses N-terminal L-arginyl-[protein] + L-leucyl-tRNA(Leu) = N-terminal L-leucyl-L-arginyl-[protein] + tRNA(Leu) + H(+). It catalyses the reaction L-phenylalanyl-tRNA(Phe) + an N-terminal L-alpha-aminoacyl-[protein] = an N-terminal L-phenylalanyl-L-alpha-aminoacyl-[protein] + tRNA(Phe). Functions in the N-end rule pathway of protein degradation where it conjugates Leu, Phe and, less efficiently, Met from aminoacyl-tRNAs to the N-termini of proteins containing an N-terminal arginine or lysine. The polypeptide is Leucyl/phenylalanyl-tRNA--protein transferase (Polaromonas sp. (strain JS666 / ATCC BAA-500)).